The chain runs to 267 residues: tRNA pseudouridine synthase A (267 aa).

Residue Asp53 is the Nucleophile of the active site. Tyr114 is a binding site for substrate.

Belongs to the tRNA pseudouridine synthase TruA family. Homodimer.

The catalysed reaction is uridine(38/39/40) in tRNA = pseudouridine(38/39/40) in tRNA. Its function is as follows. Formation of pseudouridine at positions 38, 39 and 40 in the anticodon stem and loop of transfer RNAs. This Chlamydia muridarum (strain MoPn / Nigg) protein is tRNA pseudouridine synthase A.